Here is a 275-residue protein sequence, read N- to C-terminus: NH(3)-dependent NAD(+) synthetase (275 aa).

46–53 contacts ATP; sequence GISGGQDS. Residue Asp-52 participates in Mg(2+) binding. Residue Arg-140 participates in deamido-NAD(+) binding. Thr-160 serves as a coordination point for ATP. Position 165 (Glu-165) interacts with Mg(2+). Lys-173 and Asp-180 together coordinate deamido-NAD(+). The ATP site is built by Lys-189 and Thr-211. 260 to 261 lines the deamido-NAD(+) pocket; the sequence is HK.

The protein belongs to the NAD synthetase family. In terms of assembly, homodimer.

The catalysed reaction is deamido-NAD(+) + NH4(+) + ATP = AMP + diphosphate + NAD(+) + H(+). It participates in cofactor biosynthesis; NAD(+) biosynthesis; NAD(+) from deamido-NAD(+) (ammonia route): step 1/1. Its function is as follows. Catalyzes the ATP-dependent amidation of deamido-NAD to form NAD. Uses ammonia as a nitrogen source. The sequence is that of NH(3)-dependent NAD(+) synthetase from Salmonella choleraesuis (strain SC-B67).